The chain runs to 134 residues: Small ribosomal subunit protein uS9c (134 aa).

Belongs to the universal ribosomal protein uS9 family.

Its subcellular location is the plastid. The protein resides in the chloroplast. The polypeptide is Small ribosomal subunit protein uS9c (rps9) (Euglena gracilis).